The sequence spans 148 residues: Hydrogenase expression/formation protein HoxO (148 aa).

The disordered stretch occupies residues 128–148 (IPVLSPESGTPSCSPMETSES). Residues 134-148 (ESGTPSCSPMETSES) are compositionally biased toward polar residues.

It belongs to the HupG/HyaE family.

The sequence is that of Hydrogenase expression/formation protein HoxO (hoxO) from Azotobacter vinelandii.